A 1343-amino-acid polypeptide reads, in one-letter code: DNA-directed RNA polymerase subunit beta (1343 aa).

It belongs to the RNA polymerase beta chain family. The RNAP catalytic core consists of 2 alpha, 1 beta, 1 beta' and 1 omega subunit. When a sigma factor is associated with the core the holoenzyme is formed, which can initiate transcription.

The catalysed reaction is RNA(n) + a ribonucleoside 5'-triphosphate = RNA(n+1) + diphosphate. In terms of biological role, DNA-dependent RNA polymerase catalyzes the transcription of DNA into RNA using the four ribonucleoside triphosphates as substrates. The sequence is that of DNA-directed RNA polymerase subunit beta from Shewanella baltica (strain OS155 / ATCC BAA-1091).